Reading from the N-terminus, the 252-residue chain is Geranylgeranylglyceryl phosphate synthase (252 aa).

Mg(2+) is bound by residues D27 and T57. Sn-glycerol 1-phosphate is bound by residues 175–181, 206–207, and 228–229; these read YLEAGSG, GG, and GN.

It belongs to the GGGP/HepGP synthase family. Group II subfamily. Mg(2+) serves as cofactor.

Its subcellular location is the cytoplasm. The enzyme catalyses sn-glycerol 1-phosphate + (2E,6E,10E)-geranylgeranyl diphosphate = sn-3-O-(geranylgeranyl)glycerol 1-phosphate + diphosphate. It participates in membrane lipid metabolism; glycerophospholipid metabolism. Its function is as follows. Prenyltransferase that catalyzes the transfer of the geranylgeranyl moiety of geranylgeranyl diphosphate (GGPP) to the C3 hydroxyl of sn-glycerol-1-phosphate (G1P). This reaction is the first ether-bond-formation step in the biosynthesis of archaeal membrane lipids. The polypeptide is Geranylgeranylglyceryl phosphate synthase (Metallosphaera sedula (strain ATCC 51363 / DSM 5348 / JCM 9185 / NBRC 15509 / TH2)).